The following is a 229-amino-acid chain: Vacuolar protein-sorting-associated protein 60 (229 aa).

A coiled-coil region spans residues 9-155; it reads NKKSHDQLLQ…QGDELQEVLA (147 aa). Residue Ser12 is modified to Phosphoserine. Residues 128-159 form an interaction with VTA1 region; the sequence is INIDKLQDMQDEMLDLIEQGDELQEVLAMNNN. The tract at residues 186-229 is disordered; that stretch reads PTSENSLGNDMPSYLLGANAPPAFIDEEPNLDTEDKNKALESAQ. Basic and acidic residues predominate over residues 218-229; it reads TEDKNKALESAQ.

Belongs to the SNF7 family. Interacts with VTA1; the interaction occurs at he endosomal membrane.

Its subcellular location is the endosome membrane. It localises to the vacuole membrane. Its function is as follows. Has a role in a late stage of multivesicular body (MVB) formation. Can stimulate VPS4 ATPase activity via VTA1. In Saccharomyces cerevisiae (strain ATCC 204508 / S288c) (Baker's yeast), this protein is Vacuolar protein-sorting-associated protein 60 (VPS60).